A 167-amino-acid polypeptide reads, in one-letter code: Novel acetylcholine receptor chaperone (167 aa).

The Cytoplasmic segment spans residues 1 to 5; sequence MASPR. A helical transmembrane segment spans residues 6–26; the sequence is TITIMALSVALGLFFVFMGTI. The Lumenal portion of the chain corresponds to 27 to 61; sequence KLTPRLSKDAYSEMKRAYKSYVRALPLLKKMGINS. Residues 43–54 form an interaction with NGFR region; the sequence is AYKSYVRALPLL. Residues 62-82 form a helical membrane-spanning segment; that stretch reads ILLRKSIGALEVACGIVMTLV. The Cytoplasmic portion of the chain corresponds to 83–88; that stretch reads PGRPKD. A helical transmembrane segment spans residues 89 to 109; that stretch reads VANFFLLLLVLAVLFFHQLVG. At 110–114 the chain is on the lumenal side; it reads DPLKR. Residues 115–132 form a helical membrane-spanning segment; the sequence is YAHALVFGILLTCRLLIA. Over 133-167 the chain is Cytoplasmic; it reads RKPEDRSSEKKALPESAEEQPSLYEKAPQGKVKVS. The segment covering 135 to 145 has biased composition (basic and acidic residues); sequence PEDRSSEKKAL. The disordered stretch occupies residues 135-167; sequence PEDRSSEKKALPESAEEQPSLYEKAPQGKVKVS.

It belongs to the DoxX family. In terms of assembly, may interact with NGFR. Interacts with RPN1, RPN2 and CANX. As to expression, brain (at protein level). Expressed in the spinal cord dorsal horn (at protein level).

It localises to the peroxisome membrane. The protein localises to the cytoplasmic vesicle. The protein resides in the endoplasmic reticulum membrane. Molecular chaperone which mediates the proper assembly and functional expression of the nicotinic acetylcholine receptors (nAChRs) throughout the brain. Essential for the proper folding, assembly, function and surface trafficking of alpha-7 (CHRNA7), alpha-4-beta-2, alpha-3-beta-2 and alpha-3-beta-4 receptors. Stably associates with ribophorin-1 (RPN1) and ribophorin-2 (RPN2) (components of the oligosaccharyl transferase (OST) complex) and with calnexin (CANX), both of which are critical for NACHO-mediated effects on CHRNA7 assembly and function. Facilitates the proper folding and assembly of alpha-6-beta-2 and alpha-6-beta-2-beta-3 receptors and acts at early stages of the nAChRs subunit assembly. Promotes the expression of the alpha-4(2):beta-2(3) stoichiometric form over the alpha-4(3):beta-2(2) form. The protein is Novel acetylcholine receptor chaperone of Mus musculus (Mouse).